The chain runs to 260 residues: Carbonic anhydrase 3 (260 aa).

Alanine 2 is subject to N-acetylalanine. In terms of domain architecture, Alpha-carbonic anhydrase spans 3–259 (KEWGYASHNG…INNRVVRASF (257 aa)). Residues serine 29, serine 43, serine 48, serine 50, and serine 55 each carry the phosphoserine modification. The interval 64 to 67 (KTCR) is involved in proton transfer. Position 73 is a phosphothreonine (threonine 73). Zn(2+) is bound by residues histidine 94, histidine 96, and histidine 119. Tyrosine 127 carries the post-translational modification Phosphotyrosine. A phosphothreonine mark is found at threonine 129 and threonine 176. An S-glutathionyl cysteine mark is found at cysteine 182 and cysteine 187. Residue 198–199 (TT) coordinates substrate. Phosphothreonine is present on threonine 216. Serine 219 is modified (phosphoserine).

Belongs to the alpha-carbonic anhydrase family. Zn(2+) serves as cofactor. S-thiolated both by thiol-disulfide exchange with glutathione disulfide and by oxyradical-initiated S-thiolation with reduced glutathione. In terms of processing, S-glutathionylated in hepatocytes under oxidative stress. In terms of tissue distribution, muscle specific.

The protein localises to the cytoplasm. It catalyses the reaction hydrogencarbonate + H(+) = CO2 + H2O. Activated by proton donors such as imidazole and the dipeptide histidylhistidine. Inhibited by coumarins and sulfonamide derivatives such as acetazolamide. Functionally, reversible hydration of carbon dioxide. The chain is Carbonic anhydrase 3 from Homo sapiens (Human).